A 491-amino-acid chain; its full sequence is Ribonuclease G (491 aa).

In terms of domain architecture, S1 motif spans 40-129 (GNIYKGRVTR…LTTDITLPSR (90 aa)). Residues Asp-305 and Asp-348 each coordinate Mg(2+).

It belongs to the RNase E/G family. RNase G subfamily. As to quaternary structure, homodimer, in equilibrium with possible higher multimers. Mg(2+) is required as a cofactor.

It localises to the cytoplasm. In terms of biological role, an endonuclease that acts in the processing of the 5'-end of 16S rRNA and 23S rRNA. It prefers 5'-monophosphorylated substrates and cleaves single-stranded sites rich in A and U residues; contributes to tRNA processing and mRNA turnover. This is Ribonuclease G (rng) from Haemophilus influenzae (strain ATCC 51907 / DSM 11121 / KW20 / Rd).